The following is a 321-amino-acid chain: Glycerol-3-phosphate phosphatase (321 aa).

The Nucleophile role is filled by Asp34. The Mg(2+) site is built by Asp34, Asp36, and Asp260. Asp36 acts as the Proton donor in catalysis.

The protein belongs to the HAD-like hydrolase superfamily. CbbY/CbbZ/Gph/YieH family. As to quaternary structure, homodimer. The cofactor is Mg(2+). In terms of tissue distribution, expression was confirmed in liver, adipose tissue, testis and pancreatic islet.

It carries out the reaction O-phospho-L-tyrosyl-[protein] + H2O = L-tyrosyl-[protein] + phosphate. The enzyme catalyses sn-glycerol 1-phosphate + H2O = glycerol + phosphate. The catalysed reaction is sn-glycerol 3-phosphate + H2O = glycerol + phosphate. Its function is as follows. Glycerol-3-phosphate phosphatase hydrolyzing glycerol-3-phosphate into glycerol. Thereby, regulates the cellular levels of glycerol-3-phosphate a metabolic intermediate of glucose, lipid and energy metabolism. Was also shown to have a 2-phosphoglycolate phosphatase activity and a tyrosine-protein phosphatase activity. However, their physiological relevance is unclear. In vitro, also has a phosphatase activity toward ADP, ATP, GDP and GTP. In Rattus norvegicus (Rat), this protein is Glycerol-3-phosphate phosphatase.